Reading from the N-terminus, the 189-residue chain is Alanine and glycine-rich protein (189 aa).

Residues 127-160 (AGAGGGSGGGGGGGSGSGGSGGSGGSGGSGGNDG) are compositionally biased toward gly residues. The segment at 127–170 (AGAGGGSGGGGGGGSGSGGSGGSGGSGGSGGNDGNDGNDGSSSR) is disordered.

As to expression, component of the organic matrix of calcified shell layers like nacre and prisms.

The protein resides in the secreted. In Mytilus californianus (California mussel), this protein is Alanine and glycine-rich protein.